The primary structure comprises 203 residues: Ribonuclease HII (203 aa).

An RNase H type-2 domain is found at 18-203; that stretch reads GQYAGVDEVG…SFRPVREALA (186 aa). Residues Asp-24, Glu-25, and Asp-116 each contribute to the a divalent metal cation site.

The protein belongs to the RNase HII family. It depends on Mn(2+) as a cofactor. The cofactor is Mg(2+).

It is found in the cytoplasm. It carries out the reaction Endonucleolytic cleavage to 5'-phosphomonoester.. Functionally, endonuclease that specifically degrades the RNA of RNA-DNA hybrids. In Shewanella pealeana (strain ATCC 700345 / ANG-SQ1), this protein is Ribonuclease HII.